The chain runs to 156 residues: Ribosomal RNA large subunit methyltransferase H (156 aa).

S-adenosyl-L-methionine-binding positions include Leu-73, Gly-104, and 123–128 (LSALTL).

It belongs to the RNA methyltransferase RlmH family. In terms of assembly, homodimer.

It is found in the cytoplasm. The catalysed reaction is pseudouridine(1915) in 23S rRNA + S-adenosyl-L-methionine = N(3)-methylpseudouridine(1915) in 23S rRNA + S-adenosyl-L-homocysteine + H(+). Functionally, specifically methylates the pseudouridine at position 1915 (m3Psi1915) in 23S rRNA. This chain is Ribosomal RNA large subunit methyltransferase H, found in Shewanella sp. (strain MR-7).